Here is a 630-residue protein sequence, read N- to C-terminus: tRNA uridine 5-carboxymethylaminomethyl modification enzyme MnmG (630 aa).

15–20 serves as a coordination point for FAD; the sequence is GAGHAG. An NAD(+)-binding site is contributed by 274–288; sequence GPRYCPSIEDKIVRF.

Belongs to the MnmG family. In terms of assembly, homodimer. Heterotetramer of two MnmE and two MnmG subunits. The cofactor is FAD.

The protein resides in the cytoplasm. In terms of biological role, NAD-binding protein involved in the addition of a carboxymethylaminomethyl (cmnm) group at the wobble position (U34) of certain tRNAs, forming tRNA-cmnm(5)s(2)U34. This chain is tRNA uridine 5-carboxymethylaminomethyl modification enzyme MnmG, found in Alkaliphilus oremlandii (strain OhILAs) (Clostridium oremlandii (strain OhILAs)).